The following is a 221-amino-acid chain: NADH-ubiquinone oxidoreductase chain 6 (221 aa).

The next 5 membrane-spanning stretches (helical) occupy residues 18-38 (FVEY…IYVI), 44-64 (IVSV…LNII), 74-94 (IIVY…LINI), 107-127 (IPLT…MLPY), and 195-215 (IWLI…IVIT).

This sequence belongs to the complex I subunit 6 family.

It is found in the mitochondrion membrane. The catalysed reaction is a ubiquinone + NADH + 5 H(+)(in) = a ubiquinol + NAD(+) + 4 H(+)(out). Functionally, core subunit of the mitochondrial membrane respiratory chain NADH dehydrogenase (Complex I) that is believed to belong to the minimal assembly required for catalysis. Complex I functions in the transfer of electrons from NADH to the respiratory chain. The immediate electron acceptor for the enzyme is believed to be ubiquinone. The polypeptide is NADH-ubiquinone oxidoreductase chain 6 (ND6) (Podospora anserina (strain S / ATCC MYA-4624 / DSM 980 / FGSC 10383) (Pleurage anserina)).